A 179-amino-acid chain; its full sequence is Pyridoxal 5'-phosphate synthase subunit PdxT (179 aa).

48–50 (GES) contacts L-glutamine. The Nucleophile role is filled by cysteine 79. L-glutamine contacts are provided by residues arginine 101 and 127-128 (IR). Residues histidine 163 and glutamate 165 each act as charge relay system in the active site.

It belongs to the glutaminase PdxT/SNO family. In the presence of PdxS, forms a dodecamer of heterodimers. Only shows activity in the heterodimer.

It catalyses the reaction aldehydo-D-ribose 5-phosphate + D-glyceraldehyde 3-phosphate + L-glutamine = pyridoxal 5'-phosphate + L-glutamate + phosphate + 3 H2O + H(+). The enzyme catalyses L-glutamine + H2O = L-glutamate + NH4(+). Its pathway is cofactor biosynthesis; pyridoxal 5'-phosphate biosynthesis. In terms of biological role, catalyzes the hydrolysis of glutamine to glutamate and ammonia as part of the biosynthesis of pyridoxal 5'-phosphate. The resulting ammonia molecule is channeled to the active site of PdxS. This chain is Pyridoxal 5'-phosphate synthase subunit PdxT, found in Francisella tularensis subsp. tularensis (strain FSC 198).